We begin with the raw amino-acid sequence, 149 residues long: Putative glycine cleavage system H protein 3 (149 aa).

The Lipoyl-binding domain occupies 39 to 121 (TCTLGITKYA…EDKGWLIKME (83 aa)). Residue Lys80 is modified to N6-lipoyllysine.

Belongs to the GcvH family. As to quaternary structure, the glycine cleavage system is composed of four proteins: P, T, L and H. Requires (R)-lipoate as cofactor.

The glycine cleavage system catalyzes the degradation of glycine. The H protein shuttles the methylamine group of glycine from the P protein to the T protein. This Dictyostelium discoideum (Social amoeba) protein is Putative glycine cleavage system H protein 3 (gcvH3).